The primary structure comprises 520 residues: RNA-binding protein MEX3A (520 aa).

Residues 49 to 111 (GLGEPPAPTA…QPPTAPKGAS (63 aa)) form a disordered region. Residues 60-69 (EDGGGGGGGA) show a composition bias toward gly residues. Residues 73-91 (PAAPPQPAPPPPPAAPPAA) show a composition bias toward pro residues. KH domains follow at residues 132 to 193 (TTEC…RREI) and 223 to 284 (QVTI…REEI). Position 338 is a phosphoserine (S338). The tract at residues 412-461 (SSSSAKARAGPPGAHRSPATSAGPELAGLPRRPPGEPLQGFSKLGGGGLR) is disordered. S462 carries the phosphoserine modification. The RING-type zinc finger occupies 469–509 (CMVCFESEVTAALVPCGHNLFCMECAVRICERTDPECPVCH).

In terms of processing, phosphorylated. As to expression, highest levels found in fetal brain and testis. Detected also in thymus, salivary gland and uterus.

The protein resides in the cytoplasm. It localises to the nucleus. The protein localises to the P-body. Functionally, RNA binding protein, may be involved in post-transcriptional regulatory mechanisms. This is RNA-binding protein MEX3A (MEX3A) from Homo sapiens (Human).